We begin with the raw amino-acid sequence, 117 residues long: Large ribosomal subunit protein uL18 (117 aa).

This sequence belongs to the universal ribosomal protein uL18 family. Part of the 50S ribosomal subunit; part of the 5S rRNA/L5/L18/L25 subcomplex. Contacts the 5S and 23S rRNAs.

This is one of the proteins that bind and probably mediate the attachment of the 5S RNA into the large ribosomal subunit, where it forms part of the central protuberance. The sequence is that of Large ribosomal subunit protein uL18 from Francisella tularensis subsp. novicida (strain U112).